The chain runs to 156 residues: Small ribosomal subunit protein uS7 (156 aa).

The protein belongs to the universal ribosomal protein uS7 family. In terms of assembly, part of the 30S ribosomal subunit. Contacts proteins S9 and S11.

In terms of biological role, one of the primary rRNA binding proteins, it binds directly to 16S rRNA where it nucleates assembly of the head domain of the 30S subunit. Is located at the subunit interface close to the decoding center, probably blocks exit of the E-site tRNA. The sequence is that of Small ribosomal subunit protein uS7 from Pseudomonas syringae pv. syringae (strain B728a).